The sequence spans 120 residues: MFLLHEYDIFWAFLIIASLIPILAFWISALLAPVREGPEKLSSYESGIEPMGGAWLQFRIRYYMFALVFVVFDVETVFLYPWAMSFDVLGISVFIEAFIFVLILVVGLVYAWRKGALEWS.

Transmembrane regions (helical) follow at residues 9-29, 64-84, and 88-108; these read IFWA…WISA, MFAL…PWAM, and VLGI…VVGL.

Belongs to the complex I subunit 3 family. In terms of assembly, NDH is composed of at least 16 different subunits, 5 of which are encoded in the nucleus.

Its subcellular location is the plastid. It is found in the chloroplast thylakoid membrane. It catalyses the reaction a plastoquinone + NADH + (n+1) H(+)(in) = a plastoquinol + NAD(+) + n H(+)(out). The catalysed reaction is a plastoquinone + NADPH + (n+1) H(+)(in) = a plastoquinol + NADP(+) + n H(+)(out). In terms of biological role, NDH shuttles electrons from NAD(P)H:plastoquinone, via FMN and iron-sulfur (Fe-S) centers, to quinones in the photosynthetic chain and possibly in a chloroplast respiratory chain. The immediate electron acceptor for the enzyme in this species is believed to be plastoquinone. Couples the redox reaction to proton translocation, and thus conserves the redox energy in a proton gradient. The sequence is that of NAD(P)H-quinone oxidoreductase subunit 3, chloroplastic from Oryza nivara (Indian wild rice).